Here is a 419-residue protein sequence, read N- to C-terminus: Fusaric acid cluster transcription factor FUB10 (419 aa).

The zn(2)-C6 fungal-type DNA-binding region spans 16-47 (CDRCRAQKLRCHRDSGHSTDACLRCLKSGIEC). Residues 50–92 (SKARPTGRPPSRQVQPTVVVEQGDTSSSSHTTDSSPSAGGTDM) are disordered. Over residues 74 to 86 (TSSSSHTTDSSPS) the composition is skewed to low complexity.

It is found in the nucleus. Functionally, transcription factor that regulates the expression of the gene cluster that mediates the biosynthesis of fusaric acid, a mycotoxin with low to moderate toxicity to animals and humans, but with high phytotoxic properties. This is Fusaric acid cluster transcription factor FUB10 from Gibberella fujikuroi (strain CBS 195.34 / IMI 58289 / NRRL A-6831) (Bakanae and foot rot disease fungus).